A 372-amino-acid chain; its full sequence is uncharacterized protein (372 aa).

The interval 49–72 (FSHKGGGKGGGSGAGSNDGGCSGE) is disordered. Over residues 55-70 (GKGGGSGAGSNDGGCS) the composition is skewed to gly residues.

This is an uncharacterized protein from Halorubrum lacusprofundi (strain ATCC 49239 / DSM 5036 / JCM 8891 / ACAM 34).